We begin with the raw amino-acid sequence, 249 residues long: NAD(P)H-hydrate epimerase (249 aa).

One can recognise a YjeF N-terminal domain in the interval 11 to 233 (AQQIDVELMS…ELGKKHELNI (223 aa)). 62-66 (NQGGD) is a binding site for (6S)-NADPHX. Residues glutamine 63 and aspartate 127 each contribute to the K(+) site. Residues 131 to 137 (GFSFQPP) and aspartate 162 contribute to the (6S)-NADPHX site. Serine 165 lines the K(+) pocket.

It belongs to the NnrE/AIBP family. It depends on K(+) as a cofactor.

The protein resides in the cytoplasm. It localises to the mitochondrion. It catalyses the reaction (6R)-NADHX = (6S)-NADHX. The enzyme catalyses (6R)-NADPHX = (6S)-NADPHX. Catalyzes the epimerization of the S- and R-forms of NAD(P)HX, a damaged form of NAD(P)H that is a result of enzymatic or heat-dependent hydration. This is a prerequisite for the S-specific NAD(P)H-hydrate dehydratase to allow the repair of both epimers of NAD(P)HX. This chain is NAD(P)H-hydrate epimerase, found in Cryptococcus neoformans var. neoformans serotype D (strain JEC21 / ATCC MYA-565) (Filobasidiella neoformans).